The following is a 570-amino-acid chain: MSNLLEAESSCDSKSLGVDDFTSKRCREIDKKALLITILLTFFVSLCVFLSIILPLIFLVIIPHAQSDRKIKDTNMETTNLGVNIIDEIFNSTQVPEWAKNSLLDTNTWLDTSDFNTSFTNETFAGLYTMGIFDKYDDSVQANPNVPPLNEPFPYGRLPIRGVNLGGWLSMEPFITPSFFQVKNETAYLVKDELSLHAYLGENATSVIENHYNTFVTKQTFYEIREAGLDHVRITFPYWILYSNEITNVSGIGWRYLLRSIEWAREQGLRVNLDLHAAPGNQNSWNHGGYLNQMEWLDGTVKGEENSQFTLKIHERLASFFSQKRYRNVVTIYGALNEPNFFVLDEHKITDWHKQAYAVIRQSNFTGLISLSDGFRGPGNWEDHFDPFHFPNILIDVHRYIIFNDFLIGLRPKDKLNVICKSWNEEMKLKAKLPTIIGEWSLADTDCAKFLNNVGEGARWDGTFTPNGGVASCSEKVGCRCDFANQDPENYEDSYRKFLYALATSQIETFDKTWGWFYWNWDTENATQWSYKKSWLAGLLPRLAYSTTKDFNCSMLDSKSFMEFDEQSEF.

Residues N91, N116, N121, N184, N203, and N248 are each glycosylated (N-linked (GlcNAc...) asparagine). E338 acts as the Proton donor in catalysis. Residue N364 is glycosylated (N-linked (GlcNAc...) asparagine). E439 acts as the Nucleophile in catalysis. N-linked (GlcNAc...) asparagine glycans are attached at residues N525 and N552.

It belongs to the glycosyl hydrolase 5 (cellulase A) family.

The protein resides in the secreted. The catalysed reaction is Successive hydrolysis of beta-D-glucose units from the non-reducing ends of (1-&gt;3)-beta-D-glucans, releasing alpha-glucose.. The chain is Glucan 1,3-beta-glucosidase 2 (exg2) from Schizosaccharomyces pombe (strain 972 / ATCC 24843) (Fission yeast).